Here is a 120-residue protein sequence, read N- to C-terminus: Crustacean hyperglycemic hormones 4 (120 aa).

The signal sequence occupies residues 1 to 26; sequence MVALNTLSAVSAALLVLAASPSPASA. 3 cysteine pairs are disulfide-bonded: Cys53–Cys89, Cys69–Cys85, and Cys72–Cys98. Val118 carries the valine amide modification.

It belongs to the arthropod CHH/MIH/GIH/VIH hormone family.

The protein localises to the secreted. In terms of biological role, hormone found in the sinus gland of isopods and decapods which controls the blood sugar level. Has a secretagogue action over the amylase released from the midgut gland. May act as a stress hormone and may be involved in the control of molting and reproduction. The protein is Crustacean hyperglycemic hormones 4 (CHH4) of Penaeus monodon (Giant tiger prawn).